We begin with the raw amino-acid sequence, 96 residues long: (4S)-4-hydroxy-5-phosphonooxypentane-2,3-dione isomerase (96 aa).

Residues 2 to 91 (HVTLVEINVH…MTGPRTKKVF (90 aa)) form the ABM domain.

Belongs to the LsrG family. Homodimer.

The protein localises to the cytoplasm. The enzyme catalyses (2S)-2-hydroxy-3,4-dioxopentyl phosphate = 3-hydroxy-2,4-dioxopentyl phosphate. Involved in the degradation of phospho-AI-2, thereby terminating induction of the lsr operon and closing the AI-2 signaling cycle. Catalyzes the conversion of (4S)-4-hydroxy-5-phosphonooxypentane-2,3-dione (P-DPD) to 3-hydroxy-5-phosphonooxypentane-2,4-dione (P-HPD). This chain is (4S)-4-hydroxy-5-phosphonooxypentane-2,3-dione isomerase, found in Salmonella choleraesuis (strain SC-B67).